The sequence spans 378 residues: Queuine tRNA-ribosyltransferase (378 aa).

Asp-91 functions as the Proton acceptor in the catalytic mechanism. Substrate contacts are provided by residues Asp-91–Phe-95, Asp-145, Gln-189, and Gly-216. The segment at Gly-247–Asp-253 is RNA binding. The active-site Nucleophile is the Asp-266. An RNA binding; important for wobble base 34 recognition region spans residues Thr-271 to Arg-275. Cys-304, Cys-306, Cys-309, and His-335 together coordinate Zn(2+).

This sequence belongs to the queuine tRNA-ribosyltransferase family. In terms of assembly, homodimer. Within each dimer, one monomer is responsible for RNA recognition and catalysis, while the other monomer binds to the replacement base PreQ1. Requires Zn(2+) as cofactor.

The enzyme catalyses 7-aminomethyl-7-carbaguanine + guanosine(34) in tRNA = 7-aminomethyl-7-carbaguanosine(34) in tRNA + guanine. It participates in tRNA modification; tRNA-queuosine biosynthesis. Functionally, catalyzes the base-exchange of a guanine (G) residue with the queuine precursor 7-aminomethyl-7-deazaguanine (PreQ1) at position 34 (anticodon wobble position) in tRNAs with GU(N) anticodons (tRNA-Asp, -Asn, -His and -Tyr). Catalysis occurs through a double-displacement mechanism. The nucleophile active site attacks the C1' of nucleotide 34 to detach the guanine base from the RNA, forming a covalent enzyme-RNA intermediate. The proton acceptor active site deprotonates the incoming PreQ1, allowing a nucleophilic attack on the C1' of the ribose to form the product. After dissociation, two additional enzymatic reactions on the tRNA convert PreQ1 to queuine (Q), resulting in the hypermodified nucleoside queuosine (7-(((4,5-cis-dihydroxy-2-cyclopenten-1-yl)amino)methyl)-7-deazaguanosine). This chain is Queuine tRNA-ribosyltransferase, found in Vibrio campbellii (strain ATCC BAA-1116).